The chain runs to 305 residues: Glycine--tRNA ligase alpha subunit (305 aa).

The protein belongs to the class-II aminoacyl-tRNA synthetase family. As to quaternary structure, tetramer of two alpha and two beta subunits.

It localises to the cytoplasm. It catalyses the reaction tRNA(Gly) + glycine + ATP = glycyl-tRNA(Gly) + AMP + diphosphate. The polypeptide is Glycine--tRNA ligase alpha subunit (Streptococcus gordonii (strain Challis / ATCC 35105 / BCRC 15272 / CH1 / DL1 / V288)).